The chain runs to 70 residues: Small integral membrane protein 42 (70 aa).

A helical membrane pass occupies residues 26 to 46 (LVNVLFFFTPLMTLVTLLILV).

The protein resides in the membrane. The polypeptide is Small integral membrane protein 42 (Homo sapiens (Human)).